The following is an 834-amino-acid chain: Unextended protein (834 aa).

The N-terminal stretch at Met1 to Gly20 is a signal peptide. At Thr21–Pro182 the chain is on the extracellular side. Asn38, Asn42, and Asn156 each carry an N-linked (GlcNAc...) asparagine glycan. A CNNM transmembrane domain is found at Pro182–Glu361. Residues Leu183 to Phe203 form a helical membrane-spanning segment. Residues Ser204–Asn244 lie on the Cytoplasmic side of the membrane. A helical membrane pass occupies residues Tyr245–Leu265. The Extracellular portion of the chain corresponds to Asp266–Gly267. The chain crosses the membrane as a helical span at residues Leu268 to Ile288. Residues Thr289 to Gly298 lie on the Cytoplasmic side of the membrane. The helical transmembrane segment at Leu299–Leu319 threads the bilayer. The Extracellular segment spans residues Ser320 to Pro834. 2 consecutive CBS domains span residues Met380–Leu441 and Tyr448–Glu515. The N-linked (GlcNAc...) asparagine glycan is linked to Asn522. Tyr604–Pro656 contacts a nucleoside 3',5'-cyclic phosphate. The interval Cys739–Pro765 is disordered. Polar residues predominate over residues Phe740–Arg763. N-linked (GlcNAc...) asparagine glycosylation is found at Asn743, Asn751, and Asn790. A disordered region spans residues Ser807–Pro834. The segment covering Lys822–Pro834 has biased composition (basic and acidic residues).

This sequence belongs to the ACDP family. As to quaternary structure, interacts with PRL-1, possibly at the plasma membrane.

It localises to the cell membrane. Its function is as follows. Probable metal transporter. Acts downstream of PRL-1 and protects the nervous system against olfactory carbon dioxide stimulation. The protein is Unextended protein of Drosophila melanogaster (Fruit fly).